Consider the following 922-residue polypeptide: Alpha-actinin, sarcomeric (922 aa).

Residues 1-252 form an actin-binding region; it reads MMENGGYVGQ…IMTYVSCYYH (252 aa). 2 consecutive Calponin-homology (CH) domains span residues 36–140 and 149–255; these read KQQK…LRFA and MTAK…HAFQ. Spectrin repeat units follow at residues 253 to 393, 394 to 508, 509 to 629, and 630 to 742; these read AFQG…MVSD, ITNS…RCQR, ICDQ…SADL, and ISRK…TMET. EF-hand domains are found at residues 776–811 and 817–852; these read EQLT…LGYS and QGDM…ESTD. Ca(2+)-binding residues include Asp-789, Asn-791, Thr-793, Arg-795, and Glu-800.

This sequence belongs to the alpha-actinin family. In terms of assembly, homodimer; antiparallel.

F-actin cross-linking protein which is thought to anchor actin to a variety of intracellular structures. This is a bundling protein. This chain is Alpha-actinin, sarcomeric (Actn), found in Anopheles gambiae (African malaria mosquito).